Here is a 487-residue protein sequence, read N- to C-terminus: Transcription factor GTE5, chloroplastic (487 aa).

The transit peptide at 1 to 32 (MSSEHISGGGASKTKKHKWSSSQNRPKPMGVS) directs the protein to the chloroplast. Disordered regions lie at residues 1–48 (MSSE…NSFA), 93–127 (ANPG…GADK), and 400–487 (KNEA…DNGN). In terms of domain architecture, Bromo spans 127–233 (KGTVQIFKNC…NMFEDKWVSI (107 aa)). Positions 320 to 401 (EEEAPVNNRD…GYKESLSKKN (82 aa)) constitute an NET domain. A compositionally biased stretch (basic and acidic residues) spans 400–414 (KNEAHGFGSERDAES). Over residues 415–435 (VHNSIQEPTTLVSGTTTSRVT) the composition is skewed to polar residues. Over residues 451 to 487 (NNASGSSSSNSSSSDSGSCSSDTDSDSSSGRGSDNGN) the composition is skewed to low complexity.

In terms of assembly, interacts with SIZ1 (via PHD domain). Sumoylated by SIZ1.

It is found in the plastid. It localises to the chloroplast. This Arabidopsis thaliana (Mouse-ear cress) protein is Transcription factor GTE5, chloroplastic (GTE5).